A 458-amino-acid polypeptide reads, in one-letter code: Phosphoglucosamine mutase (458 aa).

Ser106 acts as the Phosphoserine intermediate in catalysis. Mg(2+) is bound by residues Ser106, Asp247, Asp249, and Asp251. Ser106 bears the Phosphoserine mark.

The protein belongs to the phosphohexose mutase family. It depends on Mg(2+) as a cofactor. Activated by phosphorylation.

It carries out the reaction alpha-D-glucosamine 1-phosphate = D-glucosamine 6-phosphate. Functionally, catalyzes the conversion of glucosamine-6-phosphate to glucosamine-1-phosphate. This Chlamydia caviae (strain ATCC VR-813 / DSM 19441 / 03DC25 / GPIC) (Chlamydophila caviae) protein is Phosphoglucosamine mutase.